The following is a 373-amino-acid chain: tRNA-specific 2-thiouridylase MnmA (373 aa).

ATP is bound by residues 12–19 and Met38; that span reads GMSGGVDS. Residues 98 to 100 form an interaction with target base in tRNA region; that stretch reads NPD. Cys103 (nucleophile) is an active-site residue. Cys103 and Cys200 form a disulfide bridge. ATP is bound at residue Gly127. The interaction with tRNA stretch occupies residues 150-152; it reads KDQ. The Cysteine persulfide intermediate role is filled by Cys200. Residues 312–313 form an interaction with tRNA region; sequence RY.

It belongs to the MnmA/TRMU family.

Its subcellular location is the cytoplasm. It carries out the reaction S-sulfanyl-L-cysteinyl-[protein] + uridine(34) in tRNA + AH2 + ATP = 2-thiouridine(34) in tRNA + L-cysteinyl-[protein] + A + AMP + diphosphate + H(+). Its function is as follows. Catalyzes the 2-thiolation of uridine at the wobble position (U34) of tRNA, leading to the formation of s(2)U34. This is tRNA-specific 2-thiouridylase MnmA from Streptococcus pyogenes serotype M28 (strain MGAS6180).